A 357-amino-acid chain; its full sequence is Isopenicillin-N N-acyltransferase (357 aa).

Positions 121 and 310 each coordinate 6-aminopenicillanate.

It belongs to the peptidase C45 family. As to quaternary structure, the active form of the enzyme results from processing of the 40-kDa monomeric precursor to a heterodimer containing subunits of 11 and 29 kDa. In terms of processing, the pre-AAT protein is synthesized as 40 kDa precursor which is then self-processed into an 11 kDa (protein A) and a 29 kDa (protein B). The B protein carries AAT activity.

Its subcellular location is the peroxisome matrix. The catalysed reaction is isopenicillin N + phenylacetyl-CoA + H2O = penicillin G + L-2-aminoadipate + CoA + H(+). The protein operates within antibiotic biosynthesis; penicillin G biosynthesis; penicillin G from L-alpha-aminoadipate and L-cysteine and L-valine: step 3/3. Its function is as follows. Isopenicillin-N N-acyltransferase; part of the gene cluster that mediates the biosynthesis of penicillin, the world's most important antibiotic. AatA catalyzes the exchange of the alpha-aminoadipyl side chain of isopenicillin N for phenylacetic acid to yield penicillin. This step occurs in the peroxisomal matrix and the penM and paaT transporters are involved in the isopenicillin N and phenylacetic acid import into the peroxisome, respectively. The penicillin biosynthesis occurs via 3 enzymatic steps, the first corresponding to the production of the tripeptide N-[(5S)-5-amino-5-carboxypentanoyl]-L-cysteinyl-D-valine (LLD-ACV or ACV) by the NRPS acvA. The tripeptide ACV is then cyclized to isopenicillin N (IPN) by the isopenicillin N synthase ipnA that forms the beta-lactam nucleus. Finally, the alpha-aminoadipyl side chain is exchanged for phenylacetic acid by the isopenicillin N acyltransferase aatA to yield penicillin in the peroxisomal matrix. The polypeptide is Isopenicillin-N N-acyltransferase (Penicillium chrysogenum (Penicillium notatum)).